We begin with the raw amino-acid sequence, 285 residues long: Diaminopimelate epimerase (285 aa).

Positions 14 and 67 each coordinate substrate. C76 (proton donor) is an active-site residue. Substrate is bound by residues 77 to 78 (GN), N166, N199, and 217 to 218 (ER). C226 (proton acceptor) is an active-site residue. 227–228 (GT) contributes to the substrate binding site.

The protein belongs to the diaminopimelate epimerase family. As to quaternary structure, homodimer.

It localises to the cytoplasm. It carries out the reaction (2S,6S)-2,6-diaminopimelate = meso-2,6-diaminopimelate. It participates in amino-acid biosynthesis; L-lysine biosynthesis via DAP pathway; DL-2,6-diaminopimelate from LL-2,6-diaminopimelate: step 1/1. In terms of biological role, catalyzes the stereoinversion of LL-2,6-diaminopimelate (L,L-DAP) to meso-diaminopimelate (meso-DAP), a precursor of L-lysine and an essential component of the bacterial peptidoglycan. This Bacillus licheniformis (strain ATCC 14580 / DSM 13 / JCM 2505 / CCUG 7422 / NBRC 12200 / NCIMB 9375 / NCTC 10341 / NRRL NRS-1264 / Gibson 46) protein is Diaminopimelate epimerase.